We begin with the raw amino-acid sequence, 83 residues long: Beta-defensin 119 (83 aa).

The N-terminal stretch at 1-20 is a signal peptide; that stretch reads MKFLFLFLAILLAMEPVVSG. 3 disulfide bridges follow: Cys-27–Cys-54, Cys-34–Cys-48, and Cys-38–Cys-55.

Belongs to the beta-defensin family.

The protein resides in the secreted. In terms of biological role, has antibacterial activity. In Bos taurus (Bovine), this protein is Beta-defensin 119 (DEFB119).